The sequence spans 426 residues: Glutamate-1-semialdehyde 2,1-aminomutase (426 aa).

Lys-267 carries the N6-(pyridoxal phosphate)lysine modification.

It belongs to the class-III pyridoxal-phosphate-dependent aminotransferase family. HemL subfamily. Homodimer. Requires pyridoxal 5'-phosphate as cofactor.

The protein resides in the cytoplasm. It carries out the reaction (S)-4-amino-5-oxopentanoate = 5-aminolevulinate. It functions in the pathway porphyrin-containing compound metabolism; protoporphyrin-IX biosynthesis; 5-aminolevulinate from L-glutamyl-tRNA(Glu): step 2/2. The protein is Glutamate-1-semialdehyde 2,1-aminomutase of Bdellovibrio bacteriovorus (strain ATCC 15356 / DSM 50701 / NCIMB 9529 / HD100).